The following is a 91-amino-acid chain: Small ribosomal subunit protein uS19 (91 aa).

Belongs to the universal ribosomal protein uS19 family.

Functionally, protein S19 forms a complex with S13 that binds strongly to the 16S ribosomal RNA. This Erythrobacter litoralis (strain HTCC2594) protein is Small ribosomal subunit protein uS19.